Reading from the N-terminus, the 566-residue chain is SRSF protein kinase 3 (566 aa).

The span at 1–13 (MSASTGGGGGGDS) shows a compositional bias: gly residues. The segment at 1-60 (MSASTGGGGGGDSGSSSSSSSQASCGPEPSGSELAPPTPAPRMLQGLLGSDDEEQEDPKD) is disordered. Positions 14–26 (GSSSSSSSQASCG) are enriched in low complexity. Ser50 carries the post-translational modification Phosphoserine. The Protein kinase domain maps to 79–564 (YHVVRKLGWG…AADCLQHPWL (486 aa)). ATP is bound by residues 85-93 (LGWGHFSTV) and Lys108. The active-site Proton acceptor is Asp212. A compositionally biased stretch (polar residues) spans 236-254 (EWQQSGAPPPSRSTVSTAP). 2 disordered regions span residues 236-283 (EWQQ…LLEE) and 295-353 (EAAA…SGFS). Residues 263 to 278 (SKNKRKKMRRKRKQQK) show a composition bias toward basic residues. Ser329 carries the post-translational modification Phosphoserine. Residues 330–339 (PASSSPAPGG) are compositionally biased toward low complexity. The span at 344-353 (SPGSQTSGFS) shows a compositional bias: polar residues.

The protein belongs to the protein kinase superfamily. Highly expressed in skeletal muscle, heart, uterus and parorchis. Weakly expressed in brain, stomach, small intestine and ovary.

The protein resides in the nucleus. The protein localises to the cytoplasm. The catalysed reaction is L-seryl-[protein] + ATP = O-phospho-L-seryl-[protein] + ADP + H(+). The enzyme catalyses L-threonyl-[protein] + ATP = O-phospho-L-threonyl-[protein] + ADP + H(+). Serine/arginine-rich protein-specific kinase which specifically phosphorylates its substrates at serine residues located in regions rich in arginine/serine dipeptides, known as RS domains. Phosphorylates the SR splicing factor SRSF1 and the lamin-B receptor (LBR) in vitro. Required for normal muscle development. The sequence is that of SRSF protein kinase 3 (SRPK3) from Sus scrofa (Pig).